The following is an 87-amino-acid chain: Small ribosomal subunit protein uS19 (87 aa).

Belongs to the universal ribosomal protein uS19 family.

Protein S19 forms a complex with S13 that binds strongly to the 16S ribosomal RNA. The chain is Small ribosomal subunit protein uS19 from Mesoplasma florum (strain ATCC 33453 / NBRC 100688 / NCTC 11704 / L1) (Acholeplasma florum).